Consider the following 464-residue polypeptide: Probable LL-diaminopimelate aminotransferase, chloroplastic (464 aa).

The N-terminal 39 residues, 1-39, are a transit peptide targeting the chloroplast; the sequence is MAASPAAGAAAATVSSFVSPSSFSSVKASKPDRLRPARR. Glycine 102 provides a ligand contact to substrate. Tyrosine 132 contributes to the pyridoxal 5'-phosphate binding site. Positions 135, 167, 190, and 247 each coordinate substrate. Residues asparagine 247, aspartate 275, tyrosine 278, serine 305, and serine 307 each contribute to the pyridoxal 5'-phosphate site. At lysine 308 the chain carries N6-(pyridoxal phosphate)lysine. Residue arginine 316 coordinates pyridoxal 5'-phosphate. Residues asparagine 347 and arginine 442 each contribute to the substrate site.

It belongs to the class-I pyridoxal-phosphate-dependent aminotransferase family. LL-diaminopimelate aminotransferase subfamily. Homodimer. Pyridoxal 5'-phosphate is required as a cofactor.

The protein localises to the plastid. The protein resides in the chloroplast. It catalyses the reaction (2S,6S)-2,6-diaminopimelate + 2-oxoglutarate = (S)-2,3,4,5-tetrahydrodipicolinate + L-glutamate + H2O + H(+). It participates in amino-acid biosynthesis; L-lysine biosynthesis via DAP pathway; LL-2,6-diaminopimelate from (S)-tetrahydrodipicolinate (aminotransferase route): step 1/1. Its function is as follows. Required for lysine biosynthesis. Catalyzes the direct conversion of tetrahydrodipicolinate to LL-diaminopimelate, a reaction that requires three enzymes in E.coli. This Oryza sativa subsp. japonica (Rice) protein is Probable LL-diaminopimelate aminotransferase, chloroplastic (AGD2).